Consider the following 485-residue polypeptide: Aldehyde dehydrogenase family 3 member A2 (485 aa).

Residues 1-463 (MELEVRRVRQ…FLLKRFNKEK (463 aa)) are Cytoplasmic-facing. Residue 185 to 190 (GNTAVG) participates in NAD(+) binding. Catalysis depends on residues glutamate 207 and cysteine 241. Serine 293 bears the Phosphoserine mark. Residues 464–484 (LGLLLLTFLGIVAAVLVKAEY) traverse the membrane as a helical segment. The short motif at 481-484 (KAEY) is the Prevents secretion from ER element.

This sequence belongs to the aldehyde dehydrogenase family. As to quaternary structure, homodimer.

It localises to the microsome membrane. The protein localises to the endoplasmic reticulum membrane. It carries out the reaction an aldehyde + NAD(+) + H2O = a carboxylate + NADH + 2 H(+). The catalysed reaction is a fatty aldehyde + NAD(+) + H2O = a fatty acid + NADH + 2 H(+). The enzyme catalyses (2E)-hexadecenal + NAD(+) + H2O = (E)-hexadec-2-enoate + NADH + 2 H(+). It catalyses the reaction hexadecanoate + NADH + 2 H(+) = hexadecanal + NAD(+) + H2O. It carries out the reaction 22-oxodocosanoate + NAD(+) + H2O = docosanedioate + NADH + 2 H(+). The catalysed reaction is 2,6,10,14-tetramethylpentadecanal + NAD(+) + H2O = 2,6,10,14-tetramethylpentadecanoate + NADH + 2 H(+). The enzyme catalyses octadecanal + NAD(+) + H2O = octadecanoate + NADH + 2 H(+). It catalyses the reaction dodecanoate + NADH + 2 H(+) = dodecanal + NAD(+) + H2O. It carries out the reaction decanal + NAD(+) + H2O = decanoate + NADH + 2 H(+). The catalysed reaction is tetradecanal + NAD(+) + H2O = tetradecanoate + NADH + 2 H(+). The enzyme catalyses octanal + NAD(+) + H2O = octanoate + NADH + 2 H(+). It catalyses the reaction heptanal + NAD(+) + H2O = heptanoate + NADH + 2 H(+). It carries out the reaction (2E,6E)-farnesal + NAD(+) + H2O = (2E,6E)-farnesoate + NADH + 2 H(+). Catalyzes the oxidation of medium and long-chain aliphatic aldehydes to fatty acids. Active on a variety of saturated and unsaturated aliphatic aldehydes between 6 and 24 carbons in length. Responsible for conversion of the sphingosine 1-phosphate (S1P) degradation product hexadecenal to hexadecenoic acid. In Pongo abelii (Sumatran orangutan), this protein is Aldehyde dehydrogenase family 3 member A2 (ALDH3A2).